A 273-amino-acid chain; its full sequence is Undecaprenyl-diphosphatase (273 aa).

The next 8 membrane-spanning stretches (helical) occupy residues 13-35, 45-65, 90-110, 116-136, 157-177, 190-210, 222-242, and 252-272; these read LGVVEGLTEFLPVSSTGHMIIVG, ANTFEVVIQLGSILAVVVMFW, LSLIHILLGMIPAVVMGLIFH, LFNPVNVMYALIVGGVLLIAA, AFVIGCFQCLALWPGFSRSGA, YAASEFSFLLAVPMMMGATVL, GDVPMFAVGFVMAFIVALIAI, and ISFIPFAIYRFIVAAAVYVVF.

It belongs to the UppP family.

Its subcellular location is the cell inner membrane. The enzyme catalyses di-trans,octa-cis-undecaprenyl diphosphate + H2O = di-trans,octa-cis-undecaprenyl phosphate + phosphate + H(+). Functionally, catalyzes the dephosphorylation of undecaprenyl diphosphate (UPP). Confers resistance to bacitracin. The protein is Undecaprenyl-diphosphatase of Klebsiella pneumoniae subsp. pneumoniae (strain ATCC 700721 / MGH 78578).